Reading from the N-terminus, the 89-residue chain is Small ribosomal subunit protein uS15 (89 aa).

This sequence belongs to the universal ribosomal protein uS15 family. As to quaternary structure, part of the 30S ribosomal subunit. Forms a bridge to the 50S subunit in the 70S ribosome, contacting the 23S rRNA.

Its function is as follows. One of the primary rRNA binding proteins, it binds directly to 16S rRNA where it helps nucleate assembly of the platform of the 30S subunit by binding and bridging several RNA helices of the 16S rRNA. Forms an intersubunit bridge (bridge B4) with the 23S rRNA of the 50S subunit in the ribosome. The protein is Small ribosomal subunit protein uS15 of Polynucleobacter necessarius subsp. necessarius (strain STIR1).